Reading from the N-terminus, the 616-residue chain is MASSSTLANDDWKQGLAAPPKDLRPQTEDVTATQGSRFEDFGLRRELLMGIYTAGFERPSPIQEQAIPMALTGRDILARAKNGTGKTASFIIPTLNRINTSLSHIQALILVPTRELALQTSQVCKTLGAHIPNLQVMITTGGTTLRDDILRLQQPVHILVGTPGRILDLGSKGIAGLNKCGIFVMDEADKLLSEDFMPVIEQTLALCPQERQVMLFSATFPWTVKEFKDQHMVQPYEINLMDELTLKGVTQYYAYVEESQKVHCLNTLFSKLQINQSIIFCNSTNRVELLAKKVTELGYSCFYSHAKMQQAHRNRVFHDFRNGMTRNLVCSDLLTRGIDIQAVNVVINFDFPRTAESYLHRIGRSGRFGHLGLAISLLTLEDRHNLYRIESELGTEIAPIPAVIDPVLYVAPAMVEEERESPPPKPAAIAAPPAQQQPQQRQRQHPPVPSHQVAHHSPAAAPIQQQQQQQQQQQQPQYQLAYGQGPPQPQVPFQQANSSPAPAPLPSYPQQAPTQAQGPAQMQSPPSEPATQPQASAQIPVQGQTPPIQPRAQQQGQQQPSQPGQAEGQSQPNRRPNTGGFRGNGRGQGHRGRGRGRGGQPGHPGAGASQSQQAQA.

The tract at residues 1–35 (MASSSTLANDDWKQGLAAPPKDLRPQTEDVTATQG) is disordered. The Q motif signature appears at 36–64 (SRFEDFGLRRELLMGIYTAGFERPSPIQE). Positions 67 to 238 (IPMALTGRDI…DQHMVQPYEI (172 aa)) constitute a Helicase ATP-binding domain. 80–87 (AKNGTGKT) is a binding site for ATP. The short motif at 186–189 (DEAD) is the DEAD box element. The region spanning 248-408 (GVTQYYAYVE…PIPAVIDPVL (161 aa)) is the Helicase C-terminal domain. Residues 416–616 (EEERESPPPK…GASQSQQAQA (201 aa)) form a disordered region. Composition is skewed to low complexity over residues 427-441 (AAIAAPPAQQQPQQR), 458-500 (PAAA…NSSP), and 508-523 (YPQQAPTQAQGPAQMQ). Residues 529-545 (PATQPQASAQIPVQGQT) show a composition bias toward polar residues. Low complexity-rich tracts occupy residues 550–579 (PRAQQQGQQQPSQPGQAEGQSQPNRRPNTG) and 606–616 (AGASQSQQAQA).

The protein belongs to the DEAD box helicase family. DDX6/DHH1 subfamily.

Its subcellular location is the cytoplasm. The protein localises to the P-body. The enzyme catalyses ATP + H2O = ADP + phosphate + H(+). Functionally, ATP-dependent RNA helicase involved in mRNA turnover, and more specifically in mRNA decapping. Is involved in G1/S DNA-damage checkpoint recovery, probably through the regulation of the translational status of a subset of mRNAs. May also have a role in translation and mRNA nuclear export. Blocks autophagy in nutrient-rich conditions by, at least partly, binding and repressing the expression of a set of ATG genes, including ATG3, ATG7, ATG8, ATG19, ATG20 and ATG22. VAD1-mediated repression of autophagy is regulated by TOR-dependent phosphorylation of the decapping enzyme DCP2. Regulates multiple virulence-associated genes. Repression of autophagy by VAD1 also regulates the pathogenesis. The sequence is that of ATP-dependent RNA helicase VAD1 from Cryptococcus neoformans var. grubii serotype A (strain H99 / ATCC 208821 / CBS 10515 / FGSC 9487) (Filobasidiella neoformans var. grubii).